A 336-amino-acid chain; its full sequence is Toluate 1,2-dioxygenase electron transfer component (336 aa).

Residues 3–97 (HKVATDFEDG…DCVIRVPAAS (95 aa)) enclose the 2Fe-2S ferredoxin-type domain. Residues Cys40, Cys45, Cys48, and Cys81 each coordinate [2Fe-2S] cluster. A ferredoxin-reductase region spans residues 99–336 (VCKTQQAGYQ…FYYEKFAASA (238 aa)). Positions 104–204 (QAGYQAAISN…AGPLGAFYLR (101 aa)) constitute an FAD-binding FR-type domain.

Belongs to the bacterial ring-hydroxylating dioxygenase ferredoxin reductase family. In terms of assembly, this dioxygenase system consists of three proteins: the two subunits of the hydroxylase component (XylX and XylY), and an electron transfer component (XylZ). FAD is required as a cofactor. Requires [2Fe-2S] cluster as cofactor.

The catalysed reaction is 2 reduced [2Fe-2S]-[ferredoxin] + NAD(+) + H(+) = 2 oxidized [2Fe-2S]-[ferredoxin] + NADH. Its function is as follows. Electron transfer component of toluate 1,2-dioxygenase system. This Pseudomonas putida (Arthrobacter siderocapsulatus) protein is Toluate 1,2-dioxygenase electron transfer component (xylZ).